The sequence spans 412 residues: Argininosuccinate synthase (412 aa).

ATP is bound by residues 15 to 23 (AYSGGLDTS) and alanine 42. L-citrulline-binding residues include tyrosine 93 and serine 98. Glycine 123 provides a ligand contact to ATP. Residues threonine 125, asparagine 129, and aspartate 130 each contribute to the L-aspartate site. Position 129 (asparagine 129) interacts with L-citrulline. Residues arginine 133, serine 185, serine 194, glutamate 270, and tyrosine 282 each coordinate L-citrulline.

This sequence belongs to the argininosuccinate synthase family. Type 1 subfamily. In terms of assembly, homotetramer.

It is found in the cytoplasm. The catalysed reaction is L-citrulline + L-aspartate + ATP = 2-(N(omega)-L-arginino)succinate + AMP + diphosphate + H(+). The protein operates within amino-acid biosynthesis; L-arginine biosynthesis; L-arginine from L-ornithine and carbamoyl phosphate: step 2/3. The sequence is that of Argininosuccinate synthase from Psychrobacter cryohalolentis (strain ATCC BAA-1226 / DSM 17306 / VKM B-2378 / K5).